Consider the following 456-residue polypeptide: Enolase (456 aa).

A (2R)-2-phosphoglycerate-binding site is contributed by Gln-164. Glu-207 acts as the Proton donor in catalysis. Mg(2+)-binding residues include Asp-244, Glu-287, and Asp-314. Residues Lys-339, Arg-368, Ser-369, and Lys-390 each contribute to the (2R)-2-phosphoglycerate site. The active-site Proton acceptor is the Lys-339.

Belongs to the enolase family. Component of the RNA degradosome, a multiprotein complex involved in RNA processing and mRNA degradation. Requires Mg(2+) as cofactor.

Its subcellular location is the cytoplasm. It localises to the secreted. It is found in the cell surface. The catalysed reaction is (2R)-2-phosphoglycerate = phosphoenolpyruvate + H2O. The protein operates within carbohydrate degradation; glycolysis; pyruvate from D-glyceraldehyde 3-phosphate: step 4/5. Its function is as follows. Catalyzes the reversible conversion of 2-phosphoglycerate (2-PG) into phosphoenolpyruvate (PEP). It is essential for the degradation of carbohydrates via glycolysis. This chain is Enolase, found in Francisella tularensis subsp. holarctica (strain OSU18).